The sequence spans 301 residues: ATP synthase gamma chain (301 aa).

Belongs to the ATPase gamma chain family. F-type ATPases have 2 components, CF(1) - the catalytic core - and CF(0) - the membrane proton channel. CF(1) has five subunits: alpha(3), beta(3), gamma(1), delta(1), epsilon(1). CF(0) has three main subunits: a, b and c.

The protein resides in the cell inner membrane. Functionally, produces ATP from ADP in the presence of a proton gradient across the membrane. The gamma chain is believed to be important in regulating ATPase activity and the flow of protons through the CF(0) complex. This is ATP synthase gamma chain from Helicobacter pylori (strain HPAG1).